We begin with the raw amino-acid sequence, 178 residues long: Thymidine kinase (178 aa).

13–20 (GPMFAGKS) lines the ATP pocket. Glu-85 serves as the catalytic Proton acceptor. Phe-115 is a substrate binding site. The Zn(2+) site is built by Cys-140 and Cys-143. 159–163 (IEVIG) serves as a coordination point for substrate. Cys-172 and Cys-175 together coordinate Zn(2+).

Belongs to the thymidine kinase family.

It catalyses the reaction thymidine + ATP = dTMP + ADP + H(+). This chain is Thymidine kinase (TK), found in Oryctolagus cuniculus (Rabbit).